A 310-amino-acid polypeptide reads, in one-letter code: Methionyl-tRNA formyltransferase (310 aa).

110–113 (SVLP) is a (6S)-5,6,7,8-tetrahydrofolate binding site.

Belongs to the Fmt family.

It catalyses the reaction L-methionyl-tRNA(fMet) + (6R)-10-formyltetrahydrofolate = N-formyl-L-methionyl-tRNA(fMet) + (6S)-5,6,7,8-tetrahydrofolate + H(+). In terms of biological role, attaches a formyl group to the free amino group of methionyl-tRNA(fMet). The formyl group appears to play a dual role in the initiator identity of N-formylmethionyl-tRNA by promoting its recognition by IF2 and preventing the misappropriation of this tRNA by the elongation apparatus. This chain is Methionyl-tRNA formyltransferase, found in Mycolicibacterium vanbaalenii (strain DSM 7251 / JCM 13017 / BCRC 16820 / KCTC 9966 / NRRL B-24157 / PYR-1) (Mycobacterium vanbaalenii).